Reading from the N-terminus, the 228-residue chain is Superoxide dismutase [Mn], mitochondrial (228 aa).

The N-terminal 24 residues, 1–24 (MALRTLVSRRTLATGLGFRQQLRG), are a transit peptide targeting the mitochondrion. His52, His100, Asp189, and His193 together coordinate Mn(2+).

The protein belongs to the iron/manganese superoxide dismutase family. As to quaternary structure, homotetramer. It depends on Mn(2+) as a cofactor.

Its subcellular location is the mitochondrion matrix. The enzyme catalyses 2 superoxide + 2 H(+) = H2O2 + O2. Functionally, destroys superoxide anion radicals which are normally produced within the cells and which are toxic to biological systems. The chain is Superoxide dismutase [Mn], mitochondrial (SODA) from Nicotiana plumbaginifolia (Leadwort-leaved tobacco).